Reading from the N-terminus, the 277-residue chain is Ribosomal RNA small subunit methyltransferase A (277 aa).

The S-adenosyl-L-methionine site is built by asparagine 26, leucine 28, glycine 53, glutamate 74, aspartate 101, and asparagine 123.

Belongs to the class I-like SAM-binding methyltransferase superfamily. rRNA adenine N(6)-methyltransferase family. RsmA subfamily.

It localises to the cytoplasm. It catalyses the reaction adenosine(1518)/adenosine(1519) in 16S rRNA + 4 S-adenosyl-L-methionine = N(6)-dimethyladenosine(1518)/N(6)-dimethyladenosine(1519) in 16S rRNA + 4 S-adenosyl-L-homocysteine + 4 H(+). Specifically dimethylates two adjacent adenosines (A1518 and A1519) in the loop of a conserved hairpin near the 3'-end of 16S rRNA in the 30S particle. May play a critical role in biogenesis of 30S subunits. This chain is Ribosomal RNA small subunit methyltransferase A, found in Opitutus terrae (strain DSM 11246 / JCM 15787 / PB90-1).